The following is an 864-amino-acid chain: Protein 4.1 (864 aa).

2 stretches are compositionally biased toward polar residues: residues 1-16 (MTTE…NSQH) and 27-41 (NSGQ…SCQT). Disordered stretches follow at residues 1 to 122 (MTTE…GTSL), 136 to 170 (EPEL…DFEI), and 182 to 202 (IEVK…ASQK). S14 is subject to Phosphoserine. A Phosphothreonine; by CDK1 modification is found at T60. Over residues 61–75 (PTHEDLTKNKERTSE) the composition is skewed to basic and acidic residues. Low complexity predominate over residues 76-87 (SRGLSRLFSSFL). A phosphoserine mark is found at S84, S85, S95, S104, S121, S149, S151, S152, S188, and S191. The segment covering 101–117 (EVESDKEKGEGGQKEIE) has biased composition (basic and acidic residues). Positions 149–158 (SLSSAETQPA) are enriched in polar residues. A compositionally biased stretch (basic and acidic residues) spans 182 to 199 (IEVKEESPQSKAETELKA). Positions 210 to 491 (MHCKVSLLDD…EHHTFFRLTS (282 aa)) constitute an FERM domain. Y222 is modified (phosphotyrosine). The residue at position 378 (T378) is a Phosphothreonine. The segment at 494–614 (TIPKSKFLAL…QAEPEPTEAW (121 aa)) is hydrophilic. Disordered stretches follow at residues 518–572 (RQAS…VAEG) and 586–611 (KAQK…PEPT). S521, S540, S542, and S555 each carry phosphoserine. Residues 587-600 (AQKETVKAEVKKED) show a composition bias toward basic and acidic residues. Residues 601 to 610 (EPPEQAEPEP) show a composition bias toward acidic residues. The interval 615 to 713 (KVEKTHIEVT…WDKRLSTHSP (99 aa)) is spectrin--actin-binding. Y660 bears the Phosphotyrosine; by EGFR mark. Phosphoserine occurs at positions 664, 674, 684, and 709. At S712 the chain carries Phosphoserine; by CDK1. Residues 714–864 (FRTLNINGQI…VHQETEIADE (151 aa)) form a C-terminal (CTD) region. Phosphothreonine is present on residues T736 and T859.

In terms of assembly, binds with a high affinity to glycophorin and with lower affinity to band III protein. Associates with the nuclear mitotic apparatus. Interacts with calmodulin. Interacts with CPAP. Interacts with DLG1. Also found to associate with contractile apparatus and tight junctions. Interacts with NUMA1; this interaction is negatively regulated by CDK1 during metaphase and promotes anaphase-specific localization of NUMA1 in symmetrically dividing cells. Interacts with ATP2B1; regulates small intestinal calcium absorption through regulation of membrane expression of ATP2B1. Phosphorylated at multiple sites by different protein kinases and each phosphorylation event selectively modulates the protein's functions. In terms of processing, phosphorylation on Tyr-660 reduces the ability of 4.1 to promote the assembly of the spectrin/actin/4.1 ternary complex. Post-translationally, O-glycosylated; contains N-acetylglucosamine side chains in the C-terminal domain.

It localises to the cytoplasm. It is found in the cytoskeleton. Its subcellular location is the cell cortex. The protein resides in the nucleus. Functionally, protein 4.1 is a major structural element of the erythrocyte membrane skeleton. It plays a key role in regulating membrane physical properties of mechanical stability and deformability by stabilizing spectrin-actin interaction. Recruits DLG1 to membranes. Required for dynein-dynactin complex and NUMA1 recruitment at the mitotic cell cortex during anaphase. The chain is Protein 4.1 from Homo sapiens (Human).